The chain runs to 163 residues: Ribosome maturation factor RimM (163 aa).

In terms of domain architecture, PRC barrel spans 90 to 161 (EGRHYWGDLE…VVVDPPEGLL (72 aa)).

The protein belongs to the RimM family. As to quaternary structure, binds ribosomal protein uS19.

The protein localises to the cytoplasm. In terms of biological role, an accessory protein needed during the final step in the assembly of 30S ribosomal subunit, possibly for assembly of the head region. Essential for efficient processing of 16S rRNA. May be needed both before and after RbfA during the maturation of 16S rRNA. It has affinity for free ribosomal 30S subunits but not for 70S ribosomes. The polypeptide is Ribosome maturation factor RimM (Anaeromyxobacter dehalogenans (strain 2CP-C)).